We begin with the raw amino-acid sequence, 559 residues long: Leucine-rich repeat protein soc-2 (559 aa).

Residues 1–17 (METSKEFEFRPAKETSR) are compositionally biased toward basic and acidic residues. A disordered region spans residues 1 to 55 (METSKEFEFRPAKETSRSKSPGGIVGRLSNFARNKARHSLSEKGSNSVGGSGGSG). LRR repeat units lie at residues 74-95 (QDQRLDLSSIEITSIPSPIKEL), 97-118 (QLTELFLYKNKLTCLPTEIGQL), 120-141 (NLKKLGLSENALSSLPDSLSSL), 143-164 (SLETLDLRHNKLTEVPAVIYKI), 166-187 (SLETLWLRYNRIVAVDEQIGNL), 189-210 (KLKMLDVRENKIRELPSAIGKL), 212-233 (SLVVCLVSYNHLTRVPEEIGEC), 235-257 (ALTQLDLQHNDLSELPYSIGKLT), 258-279 (NLVRIGIRYNKIRCIPSELESC), 281-302 (QLEEFIVESNHLQLLPPNLLTM), 305-326 (KIHTVNLSRNELTAFPAGGPQQ), 329-350 (PTVTINMEHNQISKIPIGIFSK), 353-374 (RLTKLNLKENELVSLPLDMGSW), 376-397 (SITELNLSTNQLKVLPEDIEKL), 399-420 (NLEILVLSNNQLKKLPNQIGNL), 422-443 (KLRELDLEENELETVPTEIGFL), 445-466 (HLTKLWVQSNKIVTLPRSIGNL), 468-489 (SLQDLRLGENNLTAIPEEIGHL), 491-513 (SLKSLYLNDNSSLHNLPFELALC), and 515-536 (SLEIMSIENSPLSQIPPEITAG).

Belongs to the SHOC2 family. In terms of assembly, interacts with let-60.

Functionally, acts as a Ras effector and participates in MAPK pathway activation. Probably acts as a scaffolding protein in a protein phosphatase complex that specifically dephosphorylates Raf kinase and stimulates Raf activity at specialized signaling complexes upon Ras activation. Required for vulval development. Involved in fluid homeostasis. Plays a role in nicotinic acetylcholine receptor (nAChR)-mediated sensitivity to nicotine. This Caenorhabditis briggsae protein is Leucine-rich repeat protein soc-2 (soc-2).